Here is an 80-residue protein sequence, read N- to C-terminus: Phycocyanin-645 alpha-1 chain (80 aa).

Position 16 (arginine 16) interacts with (2R,3E)-phycocyanobilin. Residues cysteine 18, glutamine 24, tyrosine 25, and lysine 40 each contribute to the mesobiliverdin site. The 15,16-dihydrobiliverdin site is built by proline 71 and isoleucine 73.

The protein belongs to the phycoerythrin family. Heterotetramer of 2 different alpha chains and 2 identical beta chains which form 2 alpha-beta heterodimers within the heterotetramer. Post-translationally, contains one phycocyanobilin chromophore, one mesobiliverdin chromophore and one 15,16-dihydrobiliverdin chromophore with binding mediated by both the alpha and beta subunits.

It localises to the plastid. The protein localises to the chloroplast thylakoid membrane. Light-harvesting photosynthetic tetrapyrrole chromophore-protein from the phycobiliprotein complex. The sequence is that of Phycocyanin-645 alpha-1 chain from Chroomonas sp.